We begin with the raw amino-acid sequence, 387 residues long: S-adenosylmethionine synthase (387 aa).

An ATP-binding site is contributed by His-17. Position 19 (Asp-19) interacts with Mg(2+). Glu-45 contacts K(+). The L-methionine site is built by Glu-58 and Gln-101. A flexible loop region spans residues 101–111 (QSPDIAQGVDR). ATP is bound by residues 168 to 170 (DAK), 234 to 235 (RF), Asp-243, 249 to 250 (RK), Ala-266, and Lys-270. Asp-243 is a binding site for L-methionine. Lys-274 lines the L-methionine pocket.

The protein belongs to the AdoMet synthase family. As to quaternary structure, homotetramer; dimer of dimers. It depends on Mg(2+) as a cofactor. K(+) serves as cofactor.

It is found in the cytoplasm. It carries out the reaction L-methionine + ATP + H2O = S-adenosyl-L-methionine + phosphate + diphosphate. It functions in the pathway amino-acid biosynthesis; S-adenosyl-L-methionine biosynthesis; S-adenosyl-L-methionine from L-methionine: step 1/1. In terms of biological role, catalyzes the formation of S-adenosylmethionine (AdoMet) from methionine and ATP. The overall synthetic reaction is composed of two sequential steps, AdoMet formation and the subsequent tripolyphosphate hydrolysis which occurs prior to release of AdoMet from the enzyme. This is S-adenosylmethionine synthase from Bordetella bronchiseptica (strain ATCC BAA-588 / NCTC 13252 / RB50) (Alcaligenes bronchisepticus).